A 109-amino-acid polypeptide reads, in one-letter code: METQAIVRGVRLSCDKGRLVADLIRGKKVGLALDILTFTQKKAAGIIKKALESAIANAEHNDGADIDELRVTSIYVEQGATLKRFSARAKGRGNRISKPTAHIYVTVGN.

This sequence belongs to the universal ribosomal protein uL22 family. In terms of assembly, part of the 50S ribosomal subunit.

In terms of biological role, this protein binds specifically to 23S rRNA; its binding is stimulated by other ribosomal proteins, e.g. L4, L17, and L20. It is important during the early stages of 50S assembly. It makes multiple contacts with different domains of the 23S rRNA in the assembled 50S subunit and ribosome. Functionally, the globular domain of the protein is located near the polypeptide exit tunnel on the outside of the subunit, while an extended beta-hairpin is found that lines the wall of the exit tunnel in the center of the 70S ribosome. This chain is Large ribosomal subunit protein uL22, found in Leptothrix cholodnii (strain ATCC 51168 / LMG 8142 / SP-6) (Leptothrix discophora (strain SP-6)).